The following is a 499-amino-acid chain: Citrinin biosynthesis cluster MFS transporter mrr1 (499 aa).

The segment at 1–29 (MKEEIDAPVSTDASGTDLENARDQPSGEK) is disordered. A run of 8 helical transmembrane segments spans residues 58–78 (SLITCIFSTLTIWVTFSSSVF), 95–115 (VMTLGTSLTVLGFTVGPLVWG), 124–144 (LKPLYIGYAIFIIFQVPVAVA), 155–175 (FFLGFFGTSALAIIPGALADF), 187–207 (LFSAATFVGPIFGPIIGGFIV), 215–235 (WTAWITMIPASFFGIIAFLTL), 291–311 (ILVCMTIYISLIYGILYLFFV), and 327–347 (GIAALPFLGILVGVLMGCLLV). N-linked (GlcNAc...) asparagine glycosylation occurs at Asn-361. 4 consecutive transmembrane segments (helical) span residues 370 to 390 (LPPMIVAAILLPIGLFWFGWT), 395 to 415 (ISWAPQAIAGAPIGMGILMIW), 443 to 463 (AVGAAFPLFATAMYHKLGVDW), and 467 to 487 (LLGFLSIAMIPIPVIFYFYGA).

Belongs to the major facilitator superfamily. CAR1 family.

The protein resides in the membrane. In terms of biological role, MFS transporter; part of the gene cluster that mediates the biosynthesis the mycotoxin citrinin, a hepato-nephrotoxic compound to humans due to inhibition of respiration complex III. The chain is Citrinin biosynthesis cluster MFS transporter mrr1 from Monascus ruber (Mold).